Reading from the N-terminus, the 487-residue chain is Beta-barrel assembly-enhancing protease (487 aa).

A signal peptide spans 1 to 27; it reads MFRQLKKNLVATLIAAMTIGQVAPAFA. His136 lines the Zn(2+) pocket. Residue Glu137 is part of the active site. His140 and Glu201 together coordinate Zn(2+). Asp205 functions as the Proton donor in the catalytic mechanism. 4 TPR repeats span residues 309–342, 344–376, 377–409, and 427–460; these read RAAQYGRALQAMEANKYDEARKTLQPLLAAEPGN, WYLDLATDIDLGQNKANEAINRLKNARDLRTNP, VLQLNLANAYLQGGQPQEAANILNRYTFNNKDD, and DQELAARAEGYALAGRLDQAISLLSSASSQVKLG.

It belongs to the peptidase M48 family. BepA subfamily. In terms of assembly, interacts with BamA and LoiP. The cofactor is Zn(2+).

The protein resides in the periplasm. Its activity is regulated as follows. Protease activity is inhibited by the metal chelating reagents 1,10-phenanthroline and EDTA. In terms of biological role, functions both as a chaperone and a metalloprotease. Maintains the integrity of the outer membrane by promoting either the assembly or the elimination of outer membrane proteins, depending on their folding state. Promotes disulfide rearrangement of LptD during its biogenesis, and proteolytic degradation of LptD and BamA when their proper assembly is compromised. May facilitate membrane attachment of LoiP under unfavorable conditions. In Escherichia coli (strain K12), this protein is Beta-barrel assembly-enhancing protease.